The following is a 1064-amino-acid chain: Alpha-aminoadipic semialdehyde synthase (1064 aa).

The interval 24–445 (VNKWERRTPL…RACISYRGEL (422 aa)) is lysine-ketoglutarate reductase. At Thr238 the chain carries Phosphothreonine. Ser458 is subject to Phosphoserine. The segment at 583–1064 (MTKKSGVLIL…YGIKLMEKAE (482 aa)) is saccharopine dehydrogenase. Residues 703–704 (SY), Asp730, Arg830, and 852–854 (TLR) contribute to the L-saccharopine site. 729–731 (LDP) is an NADP(+) binding site.

The protein in the N-terminal section; belongs to the AlaDH/PNT family. It in the C-terminal section; belongs to the saccharopine dehydrogenase family. As to quaternary structure, homodimer. Phosphorylation of Ser-458 seems important for the LKR activity. As to expression, ubiquitous, with higher levels in flowers. Isoform Long is mostly present in young leaves, cotyledons, root tips and mature root parts. Whereas isoform Short is mostly expressed in cotyledons and at low levels in all root parts.

Its subcellular location is the cytoplasm. It catalyses the reaction L-saccharopine + NADP(+) + H2O = L-lysine + 2-oxoglutarate + NADPH + H(+). The enzyme catalyses L-saccharopine + NAD(+) + H2O = (S)-2-amino-6-oxohexanoate + L-glutamate + NADH + H(+). It functions in the pathway amino-acid degradation; L-lysine degradation via saccharopine pathway; glutaryl-CoA from L-lysine: step 1/6. The protein operates within amino-acid degradation; L-lysine degradation via saccharopine pathway; glutaryl-CoA from L-lysine: step 2/6. Its activity is regulated as follows. The LKR activity is stimulated by NaCl. Its function is as follows. Bifunctional enzyme that catalyzes the first two steps in lysine degradation. The N-terminal and the C-terminal contain lysine-oxoglutarate reductase and saccharopine dehydrogenase activity, respectively. Negatively regulates free Lys accumulation in seeds. In Arabidopsis thaliana (Mouse-ear cress), this protein is Alpha-aminoadipic semialdehyde synthase (LKR/SDH).